Here is a 144-residue protein sequence, read N- to C-terminus: 3-hydroxyacyl-[acyl-carrier-protein] dehydratase FabZ (144 aa).

H48 is an active-site residue.

The protein belongs to the thioester dehydratase family. FabZ subfamily.

The protein resides in the cytoplasm. It catalyses the reaction a (3R)-hydroxyacyl-[ACP] = a (2E)-enoyl-[ACP] + H2O. In terms of biological role, involved in unsaturated fatty acids biosynthesis. Catalyzes the dehydration of short chain beta-hydroxyacyl-ACPs and long chain saturated and unsaturated beta-hydroxyacyl-ACPs. This is 3-hydroxyacyl-[acyl-carrier-protein] dehydratase FabZ from Listeria monocytogenes serotype 4b (strain CLIP80459).